Here is a 747-residue protein sequence, read N- to C-terminus: MHSASRTRARTRVRTAVSGLLAATVLAAPLTLVAAPAQAATGDDWLHVEGNTIVDSTGKEAILSGVNWFGFNASERVFHGLWSGNITQITQQMAQRGINVVRVPVSTQLLLEWKAGTFLKPNVNTYANPELEGKNSLQIFEYWLTLCQKYGIKVFLDVHSAEADNSGHVYNMWWKGDITTEDVYEGWEWAATRWKDDDTIVGADIKNEPHGTQGSTERAKWDGTTDKDNFKHFAETASKKILAINPNWLVFVEGVEIYPKPGVPWTSTGLTDYYGTWWGGNLRGVRDHPIDLGAHQDQLVYSPHDYGPLVFDQKWFQKDFDKASLTADVWGPNWLFIHDEDIAPLLIGEWGGRLGQDPRQDKWMAALRDLVAERRLSQTFWVLNPNSGDTGGLLLDDWKTWDEVKYSTMLEPTLWKHGGKYVGLDHQVPLGGVGSTTGTSISQVGGGTPDTTAPTAPTGLRAGTPTASTVPLTWSASTDTGGSGVAGYEVYRGTTLVGTTTATSYTVTGLAADSAYTFSVRAKDGAGNTSAASAAVTARTAAGGGDVTAPSVPTGLTAGTPTATSVPLTWTASTDTGGSGVTGYEVYRGSTLVARPTGTSHTVTGLSAATAYTFTVRAVDAAGNVSAASAPVGVTTAPDPTTGSCAVTYTANGWSGGFTAAVTLTNTGTTALSGWTLGFAFPSGQTLTQGWSARWAQSGSSVTATNEAWNAVLAPGASVEIGFSGTHTGTNTAPATFTVGGATCTTR.

The signal sequence occupies residues 1-39 (MHSASRTRARTRVRTAVSGLLAATVLAAPLTLVAAPAQA). Residue glutamate 208 is the Proton donor of the active site. Residue glutamate 349 is the Nucleophile of the active site. Residues 456-475 (APTGLRAGTPTASTVPLTWS) form a disordered region. Fibronectin type-III domains lie at 456–543 (APTG…TAAG) and 552–639 (VPTG…TAPD). The segment covering 465 to 475 (PTASTVPLTWS) has biased composition (polar residues). The 110-residue stretch at 638-747 (PDPTTGSCAV…TVGGATCTTR (110 aa)) folds into the CBM2 domain.

This sequence belongs to the glycosyl hydrolase 5 (cellulase A) family.

It carries out the reaction Endohydrolysis of (1-&gt;4)-beta-D-glucosidic linkages in cellulose, lichenin and cereal beta-D-glucans.. It participates in glycan metabolism; cellulose degradation. This Cellulomonas fimi protein is Endoglucanase D (cenD).